A 468-amino-acid polypeptide reads, in one-letter code: Glutamate--tRNA ligase (468 aa).

The short motif at proline 8–glycine 18 is the 'HIGH' region element. Residues cysteine 97, cysteine 99, cysteine 124, and aspartate 126 each coordinate Zn(2+). The short motif at lysine 236–arginine 240 is the 'KMSKS' region element. Residue lysine 239 participates in ATP binding.

This sequence belongs to the class-I aminoacyl-tRNA synthetase family. Glutamate--tRNA ligase type 1 subfamily. In terms of assembly, monomer. It depends on Zn(2+) as a cofactor.

The protein localises to the cytoplasm. It carries out the reaction tRNA(Glu) + L-glutamate + ATP = L-glutamyl-tRNA(Glu) + AMP + diphosphate. Its function is as follows. Catalyzes the attachment of glutamate to tRNA(Glu) in a two-step reaction: glutamate is first activated by ATP to form Glu-AMP and then transferred to the acceptor end of tRNA(Glu). The sequence is that of Glutamate--tRNA ligase from Francisella tularensis subsp. holarctica (strain FTNF002-00 / FTA).